A 234-amino-acid chain; its full sequence is Large ribosomal subunit protein uL1 (234 aa).

This sequence belongs to the universal ribosomal protein uL1 family. Part of the 50S ribosomal subunit.

In terms of biological role, binds directly to 23S rRNA. The L1 stalk is quite mobile in the ribosome, and is involved in E site tRNA release. Its function is as follows. Protein L1 is also a translational repressor protein, it controls the translation of the L11 operon by binding to its mRNA. This chain is Large ribosomal subunit protein uL1, found in Desulfatibacillum aliphaticivorans.